Consider the following 54-residue polypeptide: MAKKENRIVITLACTECGDRNYTTTKNRKNDTNRLELMKYCPRLRKRTLHRETK.

Belongs to the bacterial ribosomal protein bL33 family.

The sequence is that of Large ribosomal subunit protein bL33 from Herpetosiphon aurantiacus (strain ATCC 23779 / DSM 785 / 114-95).